We begin with the raw amino-acid sequence, 103 residues long: Urease subunit beta (103 aa).

The protein belongs to the urease beta subunit family. As to quaternary structure, heterotrimer of UreA (gamma), UreB (beta) and UreC (alpha) subunits. Three heterotrimers associate to form the active enzyme.

It localises to the cytoplasm. It carries out the reaction urea + 2 H2O + H(+) = hydrogencarbonate + 2 NH4(+). Its pathway is nitrogen metabolism; urea degradation; CO(2) and NH(3) from urea (urease route): step 1/1. This chain is Urease subunit beta, found in Blochmanniella floridana.